A 77-amino-acid chain; its full sequence is uncharacterized protein (77 aa).

Positions Ser-56 to Asp-77 are disordered. Over residues Ser-65–Asp-77 the composition is skewed to low complexity.

This is an uncharacterized protein from Frog virus 3 (isolate Goorha) (FV-3).